Reading from the N-terminus, the 273-residue chain is Putative phosphoenolpyruvate synthase regulatory protein (273 aa).

153–160 provides a ligand contact to ADP; it reads GVSRSGKT.

It belongs to the pyruvate, phosphate/water dikinase regulatory protein family. PSRP subfamily.

The enzyme catalyses [pyruvate, water dikinase] + ADP = [pyruvate, water dikinase]-phosphate + AMP + H(+). It catalyses the reaction [pyruvate, water dikinase]-phosphate + phosphate + H(+) = [pyruvate, water dikinase] + diphosphate. Bifunctional serine/threonine kinase and phosphorylase involved in the regulation of the phosphoenolpyruvate synthase (PEPS) by catalyzing its phosphorylation/dephosphorylation. In Polaromonas sp. (strain JS666 / ATCC BAA-500), this protein is Putative phosphoenolpyruvate synthase regulatory protein.